Reading from the N-terminus, the 243-residue chain is Carboxy-S-adenosyl-L-methionine synthase (243 aa).

Residues Y39, 64–66 (GCS), 89–90 (DN), 117–118 (DL), N132, and R199 contribute to the S-adenosyl-L-methionine site.

Belongs to the class I-like SAM-binding methyltransferase superfamily. Cx-SAM synthase family. Homodimer.

It catalyses the reaction prephenate + S-adenosyl-L-methionine = carboxy-S-adenosyl-L-methionine + 3-phenylpyruvate + H2O. In terms of biological role, catalyzes the conversion of S-adenosyl-L-methionine (SAM) to carboxy-S-adenosyl-L-methionine (Cx-SAM). The protein is Carboxy-S-adenosyl-L-methionine synthase of Pseudoalteromonas atlantica (strain T6c / ATCC BAA-1087).